The sequence spans 482 residues: GPI mannosyltransferase 3 (482 aa).

A helical transmembrane segment spans residues 12–32; the sequence is LFAFIFIFRLANSFAIETFFQ. Asparagine 80 carries N-linked (GlcNAc...) asparagine glycosylation. 4 helical membrane passes run 114–134, 137–155, 175–195, and 199–219; these read KLAW…YVIT, FSNN…FWPW, IIRP…LISI, and LKWV…NTAL. An N-linked (GlcNAc...) asparagine glycan is attached at asparagine 242. 3 helical membrane-spanning segments follow: residues 252-272, 274-294, and 324-344; these read WHFY…PLMI, GLKK…FSLI, and FVLI…NVHE.

This sequence belongs to the glycosyltransferase 22 family. PIGB subfamily.

The protein localises to the endoplasmic reticulum membrane. The protein operates within glycolipid biosynthesis; glycosylphosphatidylinositol-anchor biosynthesis. In terms of biological role, mannosyltransferase involved in glycosylphosphatidylinositol-anchor biosynthesis. Transfers the third mannose to Man2-GlcN-acyl-PI during GPI precursor assembly. The protein is GPI mannosyltransferase 3 (GPI10) of Candida albicans (strain SC5314 / ATCC MYA-2876) (Yeast).